The following is a 174-amino-acid chain: Bifunctional protein PyrR (174 aa).

The PRPP-binding motif lies at 97–109 (VVIVDDVLYTGRT).

This sequence belongs to the purine/pyrimidine phosphoribosyltransferase family. PyrR subfamily. As to quaternary structure, homodimer and homohexamer; in equilibrium.

The enzyme catalyses UMP + diphosphate = 5-phospho-alpha-D-ribose 1-diphosphate + uracil. Regulates transcriptional attenuation of the pyrimidine nucleotide (pyr) operon by binding in a uridine-dependent manner to specific sites on pyr mRNA. This disrupts an antiterminator hairpin in the RNA and favors formation of a downstream transcription terminator, leading to a reduced expression of downstream genes. Its function is as follows. Also displays a weak uracil phosphoribosyltransferase activity which is not physiologically significant. In Macrococcus caseolyticus (strain JCSC5402) (Macrococcoides caseolyticum), this protein is Bifunctional protein PyrR.